Consider the following 495-residue polypeptide: Histidine--tRNA ligase (495 aa).

The protein belongs to the class-II aminoacyl-tRNA synthetase family. As to quaternary structure, homodimer.

Its subcellular location is the cytoplasm. The catalysed reaction is tRNA(His) + L-histidine + ATP = L-histidyl-tRNA(His) + AMP + diphosphate + H(+). The polypeptide is Histidine--tRNA ligase (Bartonella henselae (strain ATCC 49882 / DSM 28221 / CCUG 30454 / Houston 1) (Rochalimaea henselae)).